The primary structure comprises 342 residues: tRNA N6-adenosine threonylcarbamoyltransferase (342 aa).

The Fe cation site is built by His-111 and His-115. Residues 133 to 137, Asp-166, Gly-179, Asp-183, and Asn-272 each bind substrate; that span reads AVSGG. Residue Asp-300 coordinates Fe cation.

This sequence belongs to the KAE1 / TsaD family. The cofactor is Fe(2+).

It is found in the cytoplasm. It carries out the reaction L-threonylcarbamoyladenylate + adenosine(37) in tRNA = N(6)-L-threonylcarbamoyladenosine(37) in tRNA + AMP + H(+). In terms of biological role, required for the formation of a threonylcarbamoyl group on adenosine at position 37 (t(6)A37) in tRNAs that read codons beginning with adenine. Is involved in the transfer of the threonylcarbamoyl moiety of threonylcarbamoyl-AMP (TC-AMP) to the N6 group of A37, together with TsaE and TsaB. TsaD likely plays a direct catalytic role in this reaction. This Geobacter sp. (strain M21) protein is tRNA N6-adenosine threonylcarbamoyltransferase.